We begin with the raw amino-acid sequence, 2174 residues long: Spectinabilin polyketide synthase system protein NorB (2174 aa).

One can recognise a Ketosynthase family 3 (KS3) domain in the interval arginine 34–glutamine 459. Catalysis depends on for beta-ketoacyl synthase activity residues cysteine 206, histidine 341, and histidine 381. The 322-residue stretch at phenylalanine 567–glycine 888 folds into the Malonyl-CoA:ACP transacylase (MAT) domain. The tract at residues histidine 938–proline 1060 is N-terminal hotdog fold. Residues histidine 938–arginine 1212 enclose the PKS/mFAS DH domain. The active-site Proton acceptor; for dehydratase activity is histidine 970. Residues glutamate 1056–proline 1075 form a disordered region. Positions proline 1061–glutamate 1074 are enriched in pro residues. Positions alanine 1073–arginine 1212 are C-terminal hotdog fold. The Proton donor; for dehydratase activity role is filled by aspartate 1134. Residues glycine 1424–leucine 1726 form the Enoyl reductase (ER) domain. Residues glycine 1736–alanine 1915 enclose the Ketoreductase (KR) domain. The Carrier domain maps to proline 2017–leucine 2092. Serine 2052 carries the post-translational modification O-(pantetheine 4'-phosphoryl)serine.

As to quaternary structure, the spectinabilin polyketide synthase complex is composed of 4 proteins, NorA, NorA', NorB and NorC. The complex comprises 6 modules with a total of 28 catalytic domains catalyzing 7 chain elongations. NorA comprises one module, NorA' two modules, NorB one module and NorC two modules. Requires pantetheine 4'-phosphate as cofactor.

It carries out the reaction 4-nitrobenzoyl-CoA + 6 (S)-methylmalonyl-CoA + malonyl-CoA + 6 NADPH + 12 H(+) = demethyldeoxyspectinabilin + 7 CO2 + 6 NADP(+) + 8 CoA + 5 H2O. Its pathway is antibiotic biosynthesis. It participates in polyketide biosynthesis. Its function is as follows. Component of a type I modular polyketide synthase (PKS) that generates the backbone of the antibiotic spectinabilin (also known as neoaureothin), a nitroaryl-substituted polyketide metabolite. This PKS system accepts the unusual starter unit 4-nitrobenzoyl-CoA and extends it by 6 molecules of (S)-methylmalonyl-CoA and a single molecule of malonyl-CoA. This Streptomyces orinoci (Streptoverticillium orinoci) protein is Spectinabilin polyketide synthase system protein NorB.